Reading from the N-terminus, the 469-residue chain is Relaxin-3 receptor 1 (469 aa).

Residues 1-81 (MQMADAATIA…ESADTEARVR (81 aa)) are Extracellular-facing. Residues N36 and N40 are each glycosylated (N-linked (GlcNAc...) asparagine). The helical transmembrane segment at 82–102 (ILISVVYWVVCALGLAGNLLV) threads the bilayer. Residues 103 to 119 (LYLMKSMQGWRKSSINL) lie on the Cytoplasmic side of the membrane. A helical transmembrane segment spans residues 120–140 (FVTNLALTDFQFVLTLPFWAV). The Extracellular portion of the chain corresponds to 141–156 (ENALDFKWPFGKAMCK). A disulfide bridge links C155 with C247. A helical membrane pass occupies residues 157–177 (IVSMVTSMNMYASVFFLTAMS). Topologically, residues 178–215 (VTRYHSVASALKSHRTRGHGRGDCCGRSLGDSCCFSAK) are cytoplasmic. The helical transmembrane segment at 216 to 236 (ALCVWIWALAALASLPSAIFS) threads the bilayer. The Extracellular segment spans residues 237 to 270 (TTVKVMGEELCLVRFPDKLLGRDRQFWLGLYHSQ). A helical membrane pass occupies residues 271-291 (KVLLGFVLPLGIIILCYLLLV). The Cytoplasmic portion of the chain corresponds to 292-329 (RFIADRRAAGTKGGAAVAGGRPTGASARRLSKVTKSVT). The chain crosses the membrane as a helical span at residues 330 to 350 (IVVLSFFLCWLPNQALTTWSI). At 351 to 356 (LIKFNA) the chain is on the extracellular side. The helical transmembrane segment at 357 to 377 (VPFSQEYFLCQVYAFPVSVCL) threads the bilayer. Over 378–469 (AHSNSCLNPV…YDLLPSSSAY (92 aa)) the chain is Cytoplasmic.

This sequence belongs to the G-protein coupled receptor 1 family. Expressed predominantly in brain regions. Highest expression in substantia nigra and pituitary, followed by hippocampus, spinal cord, amygdala, caudate nucleus and corpus callosum, quite low level in cerebellum. In peripheral tissues, relatively high levels in adrenal glands, low levels in pancreas, salivary gland, placenta, mammary gland and testis.

It localises to the cell membrane. Its function is as follows. Receptor for RNL3/relaxin-3. Binding of the ligand inhibit cAMP accumulation. The chain is Relaxin-3 receptor 1 (RXFP3) from Homo sapiens (Human).